The sequence spans 494 residues: Neuronal acetylcholine receptor subunit alpha-6 (494 aa).

The N-terminal stretch at 1–25 (MLTSKGQGFLHGGLCLWLCVFTPFF) is a signal peptide. The Extracellular portion of the chain corresponds to 26–239 (KGCVGCATEE…ITYSFYIRRL (214 aa)). 2 N-linked (GlcNAc...) asparagine glycosylation sites follow: N54 and N171. Cystine bridges form between C158–C172 and C222–C223. 3 helical membrane passes run 240–264 (PMFY…VFYL), 272–290 (VTLC…LVIT), and 306–327 (YLLF…VLNI). The Cytoplasmic portion of the chain corresponds to 328 to 465 (HYRTPTTHTM…WKYVAMVVDR (138 aa)). The residue at position 401 (S401) is a Phosphoserine. Residues 466–484 (VFLWVFIIVCVFGTAGLFL) traverse the membrane as a helical segment.

Belongs to the ligand-gated ion channel (TC 1.A.9) family. Acetylcholine receptor (TC 1.A.9.1) subfamily. Alpha-6/CHRNA6 sub-subfamily. In terms of assembly, neuronal AChR is composed of two different types of subunits: alpha and non-alpha (beta). CHRNA6/alpha-6 subunit can be combined to CHRNB2/beta-2, CHRNA4/alpha-4 and CHRNB3/beta-3 to give rise to functional receptors. Heteropentamers containing CHRNB3 have an stoichiometry of (CHRNA6:CHRNB2)2:CHRNB3. Interacts with LYPD6.

It is found in the synaptic cell membrane. The enzyme catalyses Ca(2+)(in) = Ca(2+)(out). It catalyses the reaction K(+)(in) = K(+)(out). It carries out the reaction Na(+)(in) = Na(+)(out). Activated by a myriad of ligands such as acetylcholine, cytisine and nicotine. CHRNA6 nAChR activity is inhibited by the antagonists alpha-conotoxin MII and PIA, a small disulfide-constrained peptides from cone snails. Its function is as follows. Component of neuronal acetylcholine receptors (nAChRs) that function as pentameric, ligand-gated cation channels with high calcium permeability among other activities. nAChRs are excitatory neurotrasnmitter receptors formed by a collection of nAChR subunits known to mediate synaptic transmission in the nervous system and the neuromuscular junction. Each nAchR subunit confers differential attributes to channel properties, including activation, deactivation and desensitization kinetics, pH sensitivity, cation permeability, and binding to allosteric modulators. CHRNA6 forms pentameric channels with CHRNB2, CHRNB3 and CHRNA4 that exhibit high sensitivity to ACh and nicotine and are predominantly expressed in only a few brain areas, including dopaminergic neurons, norepirephrine neurons and cells of the visual system. nAChrs containing CHRNA6 subunits mediate endogenous cholinergic modulation of dopamine and gamma-aminobutyric acid (GABA) release in response to nicotine at nerve terminals. This Homo sapiens (Human) protein is Neuronal acetylcholine receptor subunit alpha-6.